A 321-amino-acid polypeptide reads, in one-letter code: Lipoyl synthase (321 aa).

The interval 1–21 (MRHRWEDRPVAPPPDGRPTEY) is disordered. Residues Cys-63, Cys-68, Cys-74, Cys-89, Cys-93, Cys-96, and Ser-302 each contribute to the [4Fe-4S] cluster site. The Radical SAM core domain occupies 75–291 (WNNRTATFMI…KKLGLEMGFS (217 aa)). Residues 301 to 321 (SSYHAHEQTEDARRGALGARG) form a disordered region. Basic and acidic residues predominate over residues 304 to 314 (HAHEQTEDARR).

The protein belongs to the radical SAM superfamily. Lipoyl synthase family. The cofactor is [4Fe-4S] cluster.

Its subcellular location is the cytoplasm. It catalyses the reaction [[Fe-S] cluster scaffold protein carrying a second [4Fe-4S](2+) cluster] + N(6)-octanoyl-L-lysyl-[protein] + 2 oxidized [2Fe-2S]-[ferredoxin] + 2 S-adenosyl-L-methionine + 4 H(+) = [[Fe-S] cluster scaffold protein] + N(6)-[(R)-dihydrolipoyl]-L-lysyl-[protein] + 4 Fe(3+) + 2 hydrogen sulfide + 2 5'-deoxyadenosine + 2 L-methionine + 2 reduced [2Fe-2S]-[ferredoxin]. It participates in protein modification; protein lipoylation via endogenous pathway; protein N(6)-(lipoyl)lysine from octanoyl-[acyl-carrier-protein]: step 2/2. Its function is as follows. Catalyzes the radical-mediated insertion of two sulfur atoms into the C-6 and C-8 positions of the octanoyl moiety bound to the lipoyl domains of lipoate-dependent enzymes, thereby converting the octanoylated domains into lipoylated derivatives. In Rubrobacter xylanophilus (strain DSM 9941 / JCM 11954 / NBRC 16129 / PRD-1), this protein is Lipoyl synthase.